The chain runs to 309 residues: Putative F-box protein At4g05475 (309 aa).

The tract at residues 1–26 (MATSTTLQSLLMKEDEEQRNKRRTTS) is disordered. In terms of domain architecture, F-box spans 37 to 84 (RINWVDLPPELTTSILLRLSVTDILDNARKLCRAWRRICKDPSMWRKI).

This is Putative F-box protein At4g05475 from Arabidopsis thaliana (Mouse-ear cress).